The primary structure comprises 1059 residues: Zinc finger protein 658 (1059 aa).

Residues 8 to 79 (VSFQDVTVEF…EDEFLNQRYP (72 aa)) form the KRAB domain. Lys-178 participates in a covalent cross-link: Glycyl lysine isopeptide (Lys-Gly) (interchain with G-Cter in SUMO2). The segment at 325-347 (FESNKCEENFSQSSAHIVHQKTQ) adopts a C2H2-type 1; degenerate zinc-finger fold. The C2H2-type 2; degenerate zinc-finger motif lies at 352-375 (FGEHNECTDALYQKLDFTAHQRIH). The C2H2-type 3; degenerate zinc finger occupies 381–406 (YLSDEHGKCRKSFYRKAHLIQHQRPH). The segment at 412 to 434 (YQYEECAKSFCSSSHPIQHPGTY) adopts a C2H2-type 4; degenerate zinc-finger fold. 14 consecutive C2H2-type zinc fingers follow at residues 440-462 (YECN…LRIH), 518-540 (YECI…QRIH), 546-568 (YECV…QRVH), 574-596 (YECN…QRIH), 602-624 (YECS…HRIH), 630-652 (YECN…QRIH), 658-680 (YECN…QRIH), 686-708 (YECS…QRIH), 714-736 (YECN…QNIH), 742-764 (YECS…RRIH), 770-792 (YECS…ERIH), 798-820 (YECN…QRIH), 826-848 (YECN…QRIH), and 854-876 (YECN…HRIH). The C2H2-type 19; degenerate zinc finger occupies 882–904 (YECNDCGKTFSKTSHLRAHLRTR). 5 consecutive C2H2-type zinc fingers follow at residues 910–932 (YECS…QRVH), 938–960 (YECN…QRIH), 966–988 (YECN…QRIH), 994–1016 (YECN…QRIH), and 1022–1045 (YECD…TRMH).

Belongs to the krueppel C2H2-type zinc-finger protein family.

It is found in the nucleus. In terms of biological role, mediates transcriptional repression in response to zinc. Represses several genes, including SLC30A5, SLC30A10 and CBWD1, by binding to the zinc transcriptional regulatory element (ZTRE) (5'-C[AC]C[TAG]CC[TC]-N(0-50)-[GA]G[ATC]G[TG]G-3') found in the promoter region. May play a role in the control of ribosome biogenesis, regulating predominantly rRNA levels, as well as those of several ribosomal proteins, thus coordinating this highly zinc-demanding process with the available zinc supply. The polypeptide is Zinc finger protein 658 (ZNF658) (Homo sapiens (Human)).